The chain runs to 207 residues: MVIVVDHPLVQHKLTKLRDKSTEPKEFRELLSEISSLMLYEVTRNLPTKEVEVETPLGIAKGKVLNNKDLAIVPILRAGLVMAEGMLRILPSAKVGHIGLYRDPNTLKPVQYYTKLPEDIDKREVVVVDPMLATGGSAIAAISILKTKGVKNIKFVCIISAPEGIEALKNSHPDVDIYTAAIDEKLNDHGYIIPGLGDAGDRLFGTK.

5-phospho-alpha-D-ribose 1-diphosphate is bound by residues R77, R102, and 129 to 137; that span reads DPMLATGGS. Uracil contacts are provided by residues I192 and 197–199; that span reads GDA. 5-phospho-alpha-D-ribose 1-diphosphate is bound at residue D198.

It belongs to the UPRTase family. It depends on Mg(2+) as a cofactor.

The catalysed reaction is UMP + diphosphate = 5-phospho-alpha-D-ribose 1-diphosphate + uracil. Its pathway is pyrimidine metabolism; UMP biosynthesis via salvage pathway; UMP from uracil: step 1/1. Allosterically activated by GTP. Functionally, catalyzes the conversion of uracil and 5-phospho-alpha-D-ribose 1-diphosphate (PRPP) to UMP and diphosphate. The protein is Uracil phosphoribosyltransferase of Dictyoglomus turgidum (strain DSM 6724 / Z-1310).